Here is a 102-residue protein sequence, read N- to C-terminus: Small ribosomal subunit protein uS10 (102 aa).

The protein belongs to the universal ribosomal protein uS10 family. In terms of assembly, part of the 30S ribosomal subunit.

In terms of biological role, involved in the binding of tRNA to the ribosomes. This chain is Small ribosomal subunit protein uS10, found in Clostridium beijerinckii (strain ATCC 51743 / NCIMB 8052) (Clostridium acetobutylicum).